The chain runs to 379 residues: MKLYEYEGKEIARKYGIETPRGILATSVEDVDKAYRELNTGTVVLKSQVLVGGRGLAGGVKKASNLEEALTKARELFSMSIKGERVEKILVEEAVCISRELYMSLTVDRATRKLVYLASGMGGVEIEELARKHPDKILRIPVDPFIGYSGYMARHALGFLGLQWDKLGQLDNIMRAMYKIMIDYDAELVEFNPLAYTCDGRLTALDAKIIIDDNSLYRHPDLQPLYGRDATPYEKVAKQLDFNYVELDGDIGVISNGAGLTMATMDSILHYGGRPANFLDIGGGATRERVREAVKIVVTHPRVKAVLVNIFGGITRCDEVASGIVEALSETKVAKPIVVRMLGTNEEEGRRILIEHGITVYTEMDEAVLRIIQLVRGVG.

In terms of domain architecture, ATP-grasp spans 9-236 (KEIARKYGIE…GRDATPYEKV (228 aa)). Residues Lys46, 53–55 (GRG), Glu92, Val95, and Glu100 each bind ATP. Mg(2+) is bound by residues Asn192 and Asp206. Residues Asn256 and 313–315 (GIT) contribute to the substrate site.

It belongs to the succinate/malate CoA ligase beta subunit family. In terms of assembly, heterotetramer of two alpha and two beta subunits. Requires Mg(2+) as cofactor.

It carries out the reaction succinate + ATP + CoA = succinyl-CoA + ADP + phosphate. The catalysed reaction is GTP + succinate + CoA = succinyl-CoA + GDP + phosphate. It participates in carbohydrate metabolism; tricarboxylic acid cycle; succinate from succinyl-CoA (ligase route): step 1/1. Its function is as follows. Succinyl-CoA synthetase functions in the citric acid cycle (TCA), coupling the hydrolysis of succinyl-CoA to the synthesis of either ATP or GTP and thus represents the only step of substrate-level phosphorylation in the TCA. The beta subunit provides nucleotide specificity of the enzyme and binds the substrate succinate, while the binding sites for coenzyme A and phosphate are found in the alpha subunit. The polypeptide is Succinate--CoA ligase [ADP-forming] subunit beta (Desulfurococcus amylolyticus (strain DSM 18924 / JCM 16383 / VKM B-2413 / 1221n) (Desulfurococcus kamchatkensis)).